The following is a 186-amino-acid chain: TATA-box-binding protein (186 aa).

A run of 2 repeats spans residues 10–86 (IENV…FDKL) and 101–179 (VQNI…VERL).

The protein belongs to the TBP family.

Functionally, general factor that plays a role in the activation of archaeal genes transcribed by RNA polymerase. Binds specifically to the TATA box promoter element which lies close to the position of transcription initiation. This is TATA-box-binding protein from Haloarcula marismortui (strain ATCC 43049 / DSM 3752 / JCM 8966 / VKM B-1809) (Halobacterium marismortui).